The primary structure comprises 126 residues: Profilin-3 (126 aa).

Belongs to the profilin family. As to quaternary structure, occurs in many kinds of cells as a complex with monomeric actin in a 1:1 ratio. In terms of tissue distribution, in embryos, expression is specifically detected in body wall muscle cells. In adults, expression is localized to a striking dot-like fashion in body wall muscle.

The protein localises to the cytoplasm. It localises to the cytoskeleton. Its function is as follows. Binds to actin and affects the structure of the cytoskeleton. At high concentrations, profilin prevents the polymerization of actin, whereas it enhances it at low concentrations. By binding to PIP2, it inhibits the formation of IP3 and DG. Also binds to poly(L-proline) and phosphatidylinositol 4,5-bisphosphate micelles. The protein is Profilin-3 (pfn-3) of Caenorhabditis elegans.